The primary structure comprises 556 residues: MSQDGGQGRYAGRALAGGRYQLRDLLGEGGMASVHLAYDSVLDRQVAIKTLHTELGREQAFRERFRREAQAVAKLTHTNIVSVFDTGEDDLDGMTTPYIVMEYVEGRPLGSVLDEDVRQQGAMPADKALKITADVLAALEISHEMGLVHRDIKPGNVMMTKRGVVKVMDFGIARAMQSGVTSMTQTGMVVGTPQYLSPEQALGRGVDARSDLYSVGIMLFQLVTGRLPFDADSPLAIAYAHVQEQPVAPSAVNRALPPAVDALVARALKKNPNERFPSAEAMRDECLRVAASFQAAPPSIVPGAQTSSGAGVGSAVFPPVGQGTPAPTGPVQTPYQPTPSPGPNPYGTPAPAAHSPAYGYPQQAGYQTPAPAPYAQQQAAATPPPYNLTPSAQGSGSGSPGGKSNKPVIIGSIVVAVVAVGGLIGALLMNGGGDEDPEAGGGGSSTASVSASPSKAAGYRGPDKEKTIEKDKCTEPQESYNDPDKIQVPDFTFKYIGSVKECFNAAGWQMKVVEVDENTYGEGSVRDQFPTAGTDVDPENMPEIQLKVSTGNPPSE.

Positions 20-287 (YQLRDLLGEG…SAEAMRDECL (268 aa)) constitute a Protein kinase domain. Residues 26 to 34 (LGEGGMASV) and K49 contribute to the ATP site. D151 serves as the catalytic Proton acceptor. Disordered regions lie at residues 300-403 (IVPG…PGGK) and 435-485 (EDPE…DPDK). Positions 336–348 (QPTPSPGPNPYGT) are enriched in pro residues. Low complexity-rich tracts occupy residues 360–381 (YPQQ…QAAA) and 445–458 (STAS…KAAG). Positions 461 to 475 (GPDKEKTIEKDKCTE) are enriched in basic and acidic residues. One can recognise a PASTA domain in the interval 482–550 (DPDKIQVPDF…MPEIQLKVST (69 aa)).

This sequence belongs to the protein kinase superfamily. Ser/Thr protein kinase family.

The catalysed reaction is L-seryl-[protein] + ATP = O-phospho-L-seryl-[protein] + ADP + H(+). It carries out the reaction L-threonyl-[protein] + ATP = O-phospho-L-threonyl-[protein] + ADP + H(+). In Streptomyces coelicolor (strain ATCC BAA-471 / A3(2) / M145), this protein is Serine/threonine-protein kinase PksC (pksC).